Consider the following 300-residue polypeptide: Haloalkane dehalogenase 1 (300 aa).

The AB hydrolase-1 domain occupies 47 to 176 (PPIVLLHGEP…FARYSPVLPA (130 aa)). D123 acts as the Nucleophile in catalysis. The active-site Proton donor is D250. The Proton acceptor role is filled by H279.

It belongs to the haloalkane dehalogenase family. Type 1 subfamily. In terms of assembly, monomer.

It carries out the reaction 1-haloalkane + H2O = a halide anion + a primary alcohol + H(+). Its function is as follows. Catalyzes hydrolytic cleavage of carbon-halogen bonds in halogenated aliphatic compounds, leading to the formation of the corresponding primary alcohols, halide ions and protons. In Mycobacterium bovis (strain ATCC BAA-935 / AF2122/97), this protein is Haloalkane dehalogenase 1 (dhmA1).